The following is a 310-amino-acid chain: GPN-loop GTPase 2 (310 aa).

Ala-2 carries the N-acetylalanine modification. 19–24 (GSGKTT) contributes to the GTP binding site. The Gly-Pro-Asn (GPN)-loop; involved in dimer interface signature appears at 76-78 (GPN). GTP is bound at residue 178-181 (SKMD).

It belongs to the GPN-loop GTPase family. In terms of assembly, heterodimers with GPN1 or GPN3. Binds to RNA polymerase II (RNAPII).

Functionally, small GTPase required for proper localization of RNA polymerase II and III (RNAPII and RNAPIII). May act at an RNAP assembly step prior to nuclear import. This Bos taurus (Bovine) protein is GPN-loop GTPase 2 (GPN2).